The primary structure comprises 422 residues: Ribosomal RNA small subunit methyltransferase B (422 aa).

Residues 254–260, aspartate 277, aspartate 303, and aspartate 322 contribute to the S-adenosyl-L-methionine site; that span reads CAAPGGK. The active-site Nucleophile is the cysteine 375.

Belongs to the class I-like SAM-binding methyltransferase superfamily. RsmB/NOP family.

Its subcellular location is the cytoplasm. It carries out the reaction cytidine(967) in 16S rRNA + S-adenosyl-L-methionine = 5-methylcytidine(967) in 16S rRNA + S-adenosyl-L-homocysteine + H(+). Specifically methylates the cytosine at position 967 (m5C967) of 16S rRNA. The chain is Ribosomal RNA small subunit methyltransferase B from Proteus mirabilis (strain HI4320).